The sequence spans 160 residues: SsrA-binding protein (160 aa).

A disordered region spans residues 133–160; that stretch reads KKLHDKRETEKERDWNRQKSRLLKGNSQ. Positions 137–149 are enriched in basic and acidic residues; sequence DKRETEKERDWNR.

It belongs to the SmpB family.

The protein localises to the cytoplasm. Functionally, required for rescue of stalled ribosomes mediated by trans-translation. Binds to transfer-messenger RNA (tmRNA), required for stable association of tmRNA with ribosomes. tmRNA and SmpB together mimic tRNA shape, replacing the anticodon stem-loop with SmpB. tmRNA is encoded by the ssrA gene; the 2 termini fold to resemble tRNA(Ala) and it encodes a 'tag peptide', a short internal open reading frame. During trans-translation Ala-aminoacylated tmRNA acts like a tRNA, entering the A-site of stalled ribosomes, displacing the stalled mRNA. The ribosome then switches to translate the ORF on the tmRNA; the nascent peptide is terminated with the 'tag peptide' encoded by the tmRNA and targeted for degradation. The ribosome is freed to recommence translation, which seems to be the essential function of trans-translation. The sequence is that of SsrA-binding protein from Agrobacterium fabrum (strain C58 / ATCC 33970) (Agrobacterium tumefaciens (strain C58)).